The following is a 61-amino-acid chain: Short neurotoxin 1 (61 aa).

Disulfide bonds link Cys-3-Cys-23, Cys-17-Cys-40, Cys-42-Cys-53, and Cys-54-Cys-59.

This sequence belongs to the three-finger toxin family. Short-chain subfamily. Type I alpha-neurotoxin sub-subfamily. As to expression, expressed by the venom gland.

It localises to the secreted. In terms of biological role, binds to muscle nicotinic acetylcholine receptor (nAChR) and inhibit acetylcholine from binding to the receptor, thereby impairing neuromuscular transmission. The protein is Short neurotoxin 1 of Naja samarensis (Peters' cobra).